The primary structure comprises 230 residues: uncharacterized protein (230 aa).

This sequence belongs to the transferase hexapeptide repeat family.

This is an uncharacterized protein from Escherichia coli O6:K15:H31 (strain 536 / UPEC).